Consider the following 423-residue polypeptide: Chitinase 1 (423 aa).

A signal peptide spans 1–22 (MLSFVKKSIALVAALQAVTALA). A propeptide spanning residues 23–34 (TPISSEAGVEKR) is cleaved from the precursor. The 364-residue stretch at 38 to 401 (FANAVYFTNW…STSHQGLGSQ (364 aa)) folds into the GH18 domain. Chitin-binding positions include 102–103 (GT) and 129–132 (GGWT). E171 acts as the Proton donor in catalysis. Chitin is bound by residues Y172, 237 to 240 (MAYD), and W378.

This sequence belongs to the glycosyl hydrolase 18 family. Chitinase class V subfamily.

The protein resides in the secreted. It catalyses the reaction Random endo-hydrolysis of N-acetyl-beta-D-glucosaminide (1-&gt;4)-beta-linkages in chitin and chitodextrins.. This is Chitinase 1 (CHI1) from Aphanocladium album (Wheat rust fungus).